Here is a 179-residue protein sequence, read N- to C-terminus: Cytochrome b6-f complex iron-sulfur subunit 1 (179 aa).

A helical membrane pass occupies residues 21–43; the sequence is LLTFGTVTGVALGALYPVVNYFI. The Rieske domain maps to 61-162; sequence GNDVSVSKFL…AKTENDKIVL (102 aa). Residues Cys-108, His-110, Cys-126, and His-129 each coordinate [2Fe-2S] cluster. Residues Cys-113 and Cys-128 are joined by a disulfide bond.

Belongs to the Rieske iron-sulfur protein family. As to quaternary structure, the 4 large subunits of the cytochrome b6-f complex are cytochrome b6, subunit IV (17 kDa polypeptide, PetD), cytochrome f and the Rieske protein, while the 4 small subunits are PetG, PetL, PetM and PetN. The complex functions as a dimer. [2Fe-2S] cluster serves as cofactor.

The protein resides in the cellular thylakoid membrane. It catalyses the reaction 2 oxidized [plastocyanin] + a plastoquinol + 2 H(+)(in) = 2 reduced [plastocyanin] + a plastoquinone + 4 H(+)(out). Functionally, component of the cytochrome b6-f complex, which mediates electron transfer between photosystem II (PSII) and photosystem I (PSI), cyclic electron flow around PSI, and state transitions. The sequence is that of Cytochrome b6-f complex iron-sulfur subunit 1 from Trichormus variabilis (strain ATCC 29413 / PCC 7937) (Anabaena variabilis).